Here is a 254-residue protein sequence, read N- to C-terminus: 3-deoxy-manno-octulosonate cytidylyltransferase (254 aa).

This sequence belongs to the KdsB family.

It is found in the cytoplasm. It catalyses the reaction 3-deoxy-alpha-D-manno-oct-2-ulosonate + CTP = CMP-3-deoxy-beta-D-manno-octulosonate + diphosphate. It functions in the pathway nucleotide-sugar biosynthesis; CMP-3-deoxy-D-manno-octulosonate biosynthesis; CMP-3-deoxy-D-manno-octulosonate from 3-deoxy-D-manno-octulosonate and CTP: step 1/1. The protein operates within bacterial outer membrane biogenesis; lipopolysaccharide biosynthesis. In terms of biological role, activates KDO (a required 8-carbon sugar) for incorporation into bacterial lipopolysaccharide in Gram-negative bacteria. The sequence is that of 3-deoxy-manno-octulosonate cytidylyltransferase from Haemophilus influenzae (strain PittEE).